A 240-amino-acid polypeptide reads, in one-letter code: Uridylate kinase (240 aa).

12–15 contributes to the ATP binding site; it reads KLSG. The segment at 20-25 is involved in allosteric activation by GTP; sequence GEKGFG. UMP is bound at residue G54. Positions 55 and 59 each coordinate ATP. UMP contacts are provided by residues D74 and 135–142; that span reads TGSPYFST. ATP is bound by residues N163, Y169, and D172.

The protein belongs to the UMP kinase family. As to quaternary structure, homohexamer.

Its subcellular location is the cytoplasm. The enzyme catalyses UMP + ATP = UDP + ADP. Its pathway is pyrimidine metabolism; CTP biosynthesis via de novo pathway; UDP from UMP (UMPK route): step 1/1. Its activity is regulated as follows. Allosterically activated by GTP. Inhibited by UTP. In terms of biological role, catalyzes the reversible phosphorylation of UMP to UDP. This chain is Uridylate kinase, found in Lactiplantibacillus plantarum (strain ATCC BAA-793 / NCIMB 8826 / WCFS1) (Lactobacillus plantarum).